The sequence spans 210 residues: Ribosomal RNA large subunit methyltransferase E (210 aa).

S-adenosyl-L-methionine is bound by residues Gly-55, Trp-57, Asp-75, Asp-93, and Asp-117. Lys-157 acts as the Proton acceptor in catalysis. The tract at residues Tyr-175–Asp-210 is disordered.

The protein belongs to the class I-like SAM-binding methyltransferase superfamily. RNA methyltransferase RlmE family.

The protein resides in the cytoplasm. The enzyme catalyses uridine(2552) in 23S rRNA + S-adenosyl-L-methionine = 2'-O-methyluridine(2552) in 23S rRNA + S-adenosyl-L-homocysteine + H(+). Functionally, specifically methylates the uridine in position 2552 of 23S rRNA at the 2'-O position of the ribose in the fully assembled 50S ribosomal subunit. The polypeptide is Ribosomal RNA large subunit methyltransferase E (Methanobrevibacter smithii (strain ATCC 35061 / DSM 861 / OCM 144 / PS)).